The following is a 170-amino-acid chain: Centrin-2 (170 aa).

Residues 1-21 (MQRGALRGASPTARRRLVDRP) form a disordered region. EF-hand domains are found at residues 26–61 (DEIE…LGFE), 62–97 (TKNP…KLGD), 99–134 (ESRE…LGET), and 135–170 (MSED…KTFP). Residues Asp-39, Asp-41, Ser-43, Met-45, and Glu-50 each contribute to the Ca(2+) site.

This sequence belongs to the centrin family. Monomer. Does not homooligomerize.

The protein localises to the cytoplasm. It localises to the cytoskeleton. It is found in the microtubule organizing center. The protein resides in the centrosome. Its function is as follows. In tachyzoites, plays an essential role in microneme secretion that ensures parasite motility and attachment to, invasion of and egress from host cells. Also involved in the architecture of the peripheral annuli where it appears to regulate the localization of PAP2. In association with the myosin motor MyoJ, involved in the constriction of the basal complex at the end of daughter cell division in an actin-dependent manner; the basal complex is a cytoskeletal structure formed at the tachyzoite basal pole during daughter cell formation. May be involved in parasite replication. The chain is Centrin-2 from Toxoplasma gondii (strain ATCC 50611 / Me49).